The chain runs to 48 residues: Small polypeptide DEVIL 14 (48 aa).

The helical transmembrane segment at 4 to 23 (TVVLRCCTSVTKVRTWKRCS) threads the bilayer. The required for DVL/RTFL small polypeptide activity stretch occupies residues 17 to 48 (RTWKRCSKQIKEQRARLYIIWKCAVFLLSSHD).

It belongs to the DVL/RTFL small polypeptides family.

It is found in the cell membrane. Its function is as follows. Small polypeptide acting as a regulatory molecule which coordinates cellular responses required for differentiation, growth and development, probably by restricting polar cell proliferation in lateral organs and coordinating socket cell recruitment and differentiation at trichome sites. This is Small polypeptide DEVIL 14 from Arabidopsis thaliana (Mouse-ear cress).